An 835-amino-acid chain; its full sequence is Axin-1 (835 aa).

Positions 16–60 (LGSSFTEDAPRPPVPGEEGDLVSSDGRQYNHSFYSSKSDSLKNEA) are disordered. Polar residues predominate over residues 40–53 (DGRQYNHSFYSSKS). One can recognise an RGS domain in the interval 92 to 214 (SLHSLLDDQD…LKSDIYLEYT (123 aa)). Positions 318–349 (ATSANDSEQQSMSSDADTLSLTDSSVDGVPPY) are disordered. A compositionally biased stretch (low complexity) spans 328–344 (SMSSDADTLSLTDSSVD). Residues 351 to 436 (YRKPHRREIH…DADISTGPSL (86 aa)) form an interaction with GSK3B region. The interaction with beta-catenin stretch occupies residues 437–512 (ANHRVPPAVH…SPDGLPAGKI (76 aa)). 2 disordered regions span residues 485–530 (KTPG…QARQ) and 602–627 (GYSSKGSTLSKRPVRKGEDGRNFEMR). The segment covering 616–627 (RKGEDGRNFEMR) has biased composition (basic and acidic residues). Residues 753 to 835 (CENITVAYYF…KIIGKVEKVD (83 aa)) form the DIX domain.

Homodimer. Interacts with dixdc1. Interacts with hwa; leading to promote the tankyrase-mediated degradation of axin1. In terms of processing, ADP-ribosylated by tankyrase tnks and tnks2. Poly-ADP-ribosylated protein is recognized by rnf146, followed by ubiquitination at 'Lys-48' and subsequent activation of the Wnt signaling pathway. Post-translationally, ubiquitinated by rnf146 when poly-ADP-ribosylated, leading to its degradation and subsequent activation of the Wnt signaling pathway.

It is found in the cytoplasm. Its subcellular location is the nucleus. The protein resides in the membrane. It localises to the cell membrane. Component of the beta-catenin destruction complex required for regulating ctnnb1 levels through phosphorylation and ubiquitination, and modulating Wnt-signaling. Controls dorsoventral patterning via two opposing effects: down-regulates ctnnb1 to inhibit the Wnt signaling pathway and ventralize embryos, but also dorsalizes embryos by activating a Wnt-independent JNK signaling pathway. The sequence is that of Axin-1 (axin1) from Danio rerio (Zebrafish).